Here is a 205-residue protein sequence, read N- to C-terminus: Putative 3-methyladenine DNA glycosylase (205 aa).

This sequence belongs to the DNA glycosylase MPG family.

This is Putative 3-methyladenine DNA glycosylase from Bacillus cereus (strain ZK / E33L).